A 332-amino-acid polypeptide reads, in one-letter code: 2,3-diketo-L-gulonate reductase (332 aa).

His44 acts as the Proton donor in catalysis. NAD(+) contacts are provided by residues 168–174 (ITMVDMS), 224–225 (WK), and 304–306 (GHE).

This sequence belongs to the LDH2/MDH2 oxidoreductase family. DlgD subfamily. Homodimer.

It is found in the cytoplasm. The enzyme catalyses 3-dehydro-L-gulonate + NAD(+) = 2,3-dioxo-L-gulonate + NADH + H(+). The catalysed reaction is 3-dehydro-L-gulonate + NADP(+) = 2,3-dioxo-L-gulonate + NADPH + H(+). Catalyzes the reduction of 2,3-diketo-L-gulonate in the presence of NADH, to form 3-keto-L-gulonate. This Klebsiella oxytoca protein is 2,3-diketo-L-gulonate reductase.